The sequence spans 86 residues: uncharacterized protein (86 aa).

This is an uncharacterized protein from Archaeoglobus fulgidus (strain ATCC 49558 / DSM 4304 / JCM 9628 / NBRC 100126 / VC-16).